The following is a 240-amino-acid chain: MKMMDANEIIEFISKSEKKTPVKVYIKGQLDNLSFGEGVQSFINGNTGVVFGEWSEIEAVLNENAALIEDTVVENDRRYSAIPLLDLKGVEARIEPGAIIRDQVEIGKGAVIMMGASINIGAVIGEGTMIDMNAVLGGRATVGKNCHVGAGAVLAGVIEPPSASPVIIEDGVVIGANAVILEGVRVGAGAVVAAGAIVTEDVPANTVVAGTPARVIKEIDEKTKGKTEIKLELRRLNEDQ.

Belongs to the transferase hexapeptide repeat family. DapH subfamily.

The enzyme catalyses (S)-2,3,4,5-tetrahydrodipicolinate + acetyl-CoA + H2O = L-2-acetamido-6-oxoheptanedioate + CoA. The protein operates within amino-acid biosynthesis; L-lysine biosynthesis via DAP pathway; LL-2,6-diaminopimelate from (S)-tetrahydrodipicolinate (acetylase route): step 1/3. In terms of biological role, catalyzes the transfer of an acetyl group from acetyl-CoA to tetrahydrodipicolinate. The protein is 2,3,4,5-tetrahydropyridine-2,6-dicarboxylate N-acetyltransferase of Shouchella clausii (strain KSM-K16) (Alkalihalobacillus clausii).